The following is a 308-amino-acid chain: Ribonuclease HIII (308 aa).

Positions 93 to 308 (MSVLGSDETG…ANTEKARKMI (216 aa)) constitute an RNase H type-2 domain. Residues Asp-99, Glu-100, and Asp-204 each contribute to the a divalent metal cation site.

It belongs to the RNase HII family. RnhC subfamily. Mn(2+) is required as a cofactor. Requires Mg(2+) as cofactor.

The protein resides in the cytoplasm. The catalysed reaction is Endonucleolytic cleavage to 5'-phosphomonoester.. In terms of biological role, endonuclease that specifically degrades the RNA of RNA-DNA hybrids. The polypeptide is Ribonuclease HIII (Lysinibacillus sphaericus (strain C3-41)).